Reading from the N-terminus, the 250-residue chain is Heat stress transcription factor C-1b (250 aa).

The stretch at 129–182 (EEGEEVRGTIEAVQRLREEQRGMEEELQAMDQRLRAAESRPGQMMAFLAKLADE) forms a coiled coil. The segment at 144 to 180 (LREEQRGMEEELQAMDQRLRAAESRPGQMMAFLAKLA) is hydrophobic repeat HR-A/B. The segment at 199–226 (AAGNNGSDPCKRRRIGADTGRGGVATGG) is disordered. The Nuclear localization signal signature appears at 209–212 (KRRR).

Belongs to the HSF family. Class C subfamily. In terms of assembly, homotrimer. Post-translationally, exhibits temperature-dependent phosphorylation.

Its subcellular location is the nucleus. Functionally, transcriptional regulator that specifically binds DNA of heat shock promoter elements (HSE). This is Heat stress transcription factor C-1b (HSFC1B) from Oryza sativa subsp. japonica (Rice).